A 362-amino-acid polypeptide reads, in one-letter code: Molybdenum import ATP-binding protein ModC (362 aa).

Positions 2–236 (ASPIEVRLHM…LDLPLAMGGD (235 aa)) constitute an ABC transporter domain. 34–41 (GPSGSGKT) provides a ligand contact to ATP. Residues 297-362 (QSSILNRLPV…AQIKAVAVLA (66 aa)) form the Mop domain.

The protein belongs to the ABC transporter superfamily. Molybdate importer (TC 3.A.1.8) family. In terms of assembly, the complex is composed of two ATP-binding proteins (ModC), two transmembrane proteins (ModB) and a solute-binding protein (ModA).

Its subcellular location is the cell inner membrane. The catalysed reaction is molybdate(out) + ATP + H2O = molybdate(in) + ADP + phosphate + H(+). Its function is as follows. Part of the ABC transporter complex ModABC involved in molybdenum import. Responsible for energy coupling to the transport system. This chain is Molybdenum import ATP-binding protein ModC, found in Pseudomonas savastanoi pv. phaseolicola (strain 1448A / Race 6) (Pseudomonas syringae pv. phaseolicola (strain 1448A / Race 6)).